The following is a 1374-amino-acid chain: Y' element ATP-dependent helicase YLL066C (1374 aa).

The tract at residues 321–345 (AGEAASSDHDQKISRVTRKRPREPK) is disordered. The region spanning 375-552 (EIYMADTPSV…LQRIGLTGLA (178 aa)) is the Helicase ATP-binding domain. 388-395 (APPGYGKT) serves as a coordination point for ATP. The short motif at 498–501 (DEFH) is the DEAH box element. A Helicase C-terminal domain is found at 609 to 758 (KLLLALFEIE…EFYGLESKKG (150 aa)). A compositionally biased stretch (low complexity) spans 832 to 975 (ANASTNATTN…ATTTESTNAS (144 aa)). Residues 832-999 (ANASTNATTN…RFHPVTDINK (168 aa)) are disordered. Residues 976-999 (AKEDANKDGNAEDNRFHPVTDINK) are compositionally biased toward basic and acidic residues.

It belongs to the helicase family. Yeast subtelomeric Y' repeat subfamily.

Functionally, catalyzes DNA unwinding and is involved in telomerase-independent telomere maintenance. The protein is Y' element ATP-dependent helicase YLL066C of Saccharomyces cerevisiae (strain ATCC 204508 / S288c) (Baker's yeast).